Reading from the N-terminus, the 108-residue chain is Insulin (108 aa).

Positions 1–23 (MALWILLPLLALLILWGPDPAQA) are cleaved as a signal peptide. 2 disulfides stabilise this stretch: C30–C94 and C43–C107. A propeptide spans 57-88 (EVEDPQVGQVELGAGPGAGSEQTLALEVARQA) (c peptide).

It belongs to the insulin family. Heterodimer of a B chain and an A chain linked by two disulfide bonds.

The protein localises to the secreted. In terms of biological role, insulin decreases blood glucose concentration. It increases cell permeability to monosaccharides, amino acids and fatty acids. It accelerates glycolysis, the pentose phosphate cycle, and glycogen synthesis in liver. In Rodentia sp, this protein is Insulin (INS).